The primary structure comprises 160 residues: N-acetyltransferase Pat (160 aa).

An N-acetyltransferase domain is found at 5–148 (IKIRKATKED…VYGEMRLTER (144 aa)). CoA-binding residues include Leu79, Val81, Thr87, Gly89, Gly91, Thr92, Asn118, Lys123, and Lys127.

This sequence belongs to the acetyltransferase family. GNAT subfamily.

It carries out the reaction L-lysyl-[protein] + acetyl-CoA = N(6)-acetyl-L-lysyl-[protein] + CoA + H(+). Modulates activity of albA1, the major archaeal DNA compaction protein, by decreasing albA1's nucleic acid binding affinity through acetylation of 'Lys-16'. This Saccharolobus solfataricus (strain ATCC 35092 / DSM 1617 / JCM 11322 / P2) (Sulfolobus solfataricus) protein is N-acetyltransferase Pat.